The sequence spans 428 residues: 3-phosphoshikimate 1-carboxyvinyltransferase (428 aa).

Residues K21, S22, and R26 each contribute to the 3-phosphoshikimate site. K21 contributes to the phosphoenolpyruvate binding site. Positions 91 and 119 each coordinate phosphoenolpyruvate. Positions 164, 166, 313, and 340 each coordinate 3-phosphoshikimate. Q166 provides a ligand contact to phosphoenolpyruvate. D313 functions as the Proton acceptor in the catalytic mechanism. Residues R344 and R386 each contribute to the phosphoenolpyruvate site.

Belongs to the EPSP synthase family. In terms of assembly, monomer.

The protein resides in the cytoplasm. It catalyses the reaction 3-phosphoshikimate + phosphoenolpyruvate = 5-O-(1-carboxyvinyl)-3-phosphoshikimate + phosphate. It functions in the pathway metabolic intermediate biosynthesis; chorismate biosynthesis; chorismate from D-erythrose 4-phosphate and phosphoenolpyruvate: step 6/7. Functionally, catalyzes the transfer of the enolpyruvyl moiety of phosphoenolpyruvate (PEP) to the 5-hydroxyl of shikimate-3-phosphate (S3P) to produce enolpyruvyl shikimate-3-phosphate and inorganic phosphate. The chain is 3-phosphoshikimate 1-carboxyvinyltransferase from Campylobacter jejuni subsp. jejuni serotype O:23/36 (strain 81-176).